We begin with the raw amino-acid sequence, 351 residues long: Phosphoribosylformylglycinamidine cyclo-ligase (351 aa).

This sequence belongs to the AIR synthase family.

It is found in the cytoplasm. The catalysed reaction is 2-formamido-N(1)-(5-O-phospho-beta-D-ribosyl)acetamidine + ATP = 5-amino-1-(5-phospho-beta-D-ribosyl)imidazole + ADP + phosphate + H(+). The protein operates within purine metabolism; IMP biosynthesis via de novo pathway; 5-amino-1-(5-phospho-D-ribosyl)imidazole from N(2)-formyl-N(1)-(5-phospho-D-ribosyl)glycinamide: step 2/2. The polypeptide is Phosphoribosylformylglycinamidine cyclo-ligase (Burkholderia ambifaria (strain ATCC BAA-244 / DSM 16087 / CCUG 44356 / LMG 19182 / AMMD) (Burkholderia cepacia (strain AMMD))).